The sequence spans 609 residues: UvrABC system protein C (609 aa).

A GIY-YIG domain is found at 13–91 (HQPGVYRMFD…IKAFQPRYNV (79 aa)). Positions 201–236 (QQVLEHLIKKMEQASMQLNFEQAAYFRDQIQAIRAV) constitute a UVR domain.

It belongs to the UvrC family. As to quaternary structure, interacts with UvrB in an incision complex.

The protein resides in the cytoplasm. The UvrABC repair system catalyzes the recognition and processing of DNA lesions. UvrC both incises the 5' and 3' sides of the lesion. The N-terminal half is responsible for the 3' incision and the C-terminal half is responsible for the 5' incision. In Histophilus somni (strain 2336) (Haemophilus somnus), this protein is UvrABC system protein C.